We begin with the raw amino-acid sequence, 88 residues long: UPF0250 protein Swoo_3713 (88 aa).

This sequence belongs to the UPF0250 family.

The chain is UPF0250 protein Swoo_3713 from Shewanella woodyi (strain ATCC 51908 / MS32).